The primary structure comprises 610 residues: Aspercryptin biosynthesis cluster-specific transcription regulator atnN (610 aa).

Positions 1–26 (MAPKDSQVSASNEMTGNPPSSVQGRS) are enriched in polar residues. Residues 1-27 (MAPKDSQVSASNEMTGNPPSSVQGRSR) form a disordered region. Positions 30–57 (CITCRIRRVKCDEERPHCRRCQSTGRKC) form a DNA-binding region, zn(2)-C6 fungal-type. Disordered stretches follow at residues 61 to 81 (TPLT…KAGS) and 427 to 493 (AGST…LPRP). 2 stretches are compositionally biased toward low complexity: residues 66-79 (QQPK…AAKA) and 437-474 (SRAG…TPTP).

The protein resides in the nucleus. Transcription factor that positively regulates the cluster that mediate the production of aspercryptins, linear lipopeptides built from six amino acids including 2 highly unusual and nonproteogenic amino acids, 2-amino-octanoic acid (2aoa) and 2-amino-dodecanol (2adol). In Emericella nidulans (strain FGSC A4 / ATCC 38163 / CBS 112.46 / NRRL 194 / M139) (Aspergillus nidulans), this protein is Aspercryptin biosynthesis cluster-specific transcription regulator atnN.